Here is a 388-residue protein sequence, read N- to C-terminus: Envelope protein F13 homolog (388 aa).

G2 carries N-myristoyl glycine; by host lipidation. A PLD phosphodiesterase domain is found at G310–H337.

The protein resides in the virion membrane. It is found in the host endoplasmic reticulum membrane. Functionally, envelope protein associated with the inner side of the enveloped virion (EV) membrane. The protein is Envelope protein F13 homolog (P43K) of Molluscum contagiosum virus subtype 2 (MOCV).